The sequence spans 352 residues: Phosphoribosylformylglycinamidine cyclo-ligase (352 aa).

It belongs to the AIR synthase family.

It is found in the cytoplasm. The catalysed reaction is 2-formamido-N(1)-(5-O-phospho-beta-D-ribosyl)acetamidine + ATP = 5-amino-1-(5-phospho-beta-D-ribosyl)imidazole + ADP + phosphate + H(+). Its pathway is purine metabolism; IMP biosynthesis via de novo pathway; 5-amino-1-(5-phospho-D-ribosyl)imidazole from N(2)-formyl-N(1)-(5-phospho-D-ribosyl)glycinamide: step 2/2. This chain is Phosphoribosylformylglycinamidine cyclo-ligase, found in Azoarcus sp. (strain BH72).